Consider the following 356-residue polypeptide: Major capsid protein (356 aa).

The protein belongs to the baculoviridae p39 family.

The protein resides in the virion. The chain is Major capsid protein (P39) from Lepidoptera (butterflies and moths).